A 204-amino-acid chain; its full sequence is Tetraspanin-13 (204 aa).

Topologically, residues 1–19 (MVCGGFSCSKNCLCALNLL) are cytoplasmic. Residues 20-40 (YTLVSLLLIGIAAWGIGFGLI) form a helical membrane-spanning segment. Over 41-44 (SSLR) the chain is Extracellular. A helical transmembrane segment spans residues 45-65 (VVGVVIAVGIFLFLIALVGLI). Residues 66-72 (GAVKHHQ) lie on the Cytoplasmic side of the membrane. A helical transmembrane segment spans residues 73 to 93 (VLLFFYMIILLLVFIVQFSVS). Over 94–167 (CACLALNREQ…IGEYAGEVLR (74 aa)) the chain is Extracellular. N113 and N137 each carry an N-linked (GlcNAc...) asparagine glycan. S143 is modified (phosphoserine). A helical membrane pass occupies residues 168-188 (FVGGIGLFFSFTEILGVWLTY). Residues 189-204 (RYRNQKDPRANPSAFL) lie on the Cytoplasmic side of the membrane.

Belongs to the tetraspanin (TM4SF) family.

Its subcellular location is the membrane. The chain is Tetraspanin-13 (Tspan13) from Mus musculus (Mouse).